A 471-amino-acid chain; its full sequence is UDP-glycosyltransferase CGT (471 aa).

Catalysis depends on histidine 24, which acts as the Proton acceptor. An an anthocyanidin-binding site is contributed by histidine 24. Aspartate 120 functions as the Charge relay in the catalytic mechanism. Threonine 143 is a binding site for UDP-alpha-D-glucose. Residues 280–281 (SR) are UDP. Residues valine 343, glutamine 345, histidine 360, tryptophan 363, asparagine 364, serine 365, and glutamate 368 each contribute to the UDP-alpha-D-glucose site. Residue glycine 383 participates in an anthocyanidin binding. Residues aspartate 384 and glutamine 385 each coordinate UDP-alpha-D-glucose.

Belongs to the UDP-glycosyltransferase family.

It carries out the reaction a 3'-hydro-2'-hydroxy-beta-oxodihydrochalcone + UDP-alpha-D-glucose = a 3'-(beta-D-glucopyranosyl)-2'-hydroxy-beta-oxodihydrochalcone + UDP + H(+). Functionally, UDP-glucose-dependent glucosyltransferase catalyzing the c-glucosylation of 2-hydroxyflavanones. This is UDP-glycosyltransferase CGT from Oryza sativa subsp. japonica (Rice).